Consider the following 215-residue polypeptide: Orotate phosphoribosyltransferase (215 aa).

A 5-phospho-alpha-D-ribose 1-diphosphate-binding site is contributed by lysine 26. 34–35 (FF) lines the orotate pocket. 5-phospho-alpha-D-ribose 1-diphosphate-binding positions include 72–73 (YK), arginine 99, lysine 100, lysine 103, histidine 105, and 124–132 (DDVITAGTA). 2 residues coordinate orotate: threonine 128 and arginine 156.

This sequence belongs to the purine/pyrimidine phosphoribosyltransferase family. PyrE subfamily. As to quaternary structure, homodimer. Requires Mg(2+) as cofactor.

It catalyses the reaction orotidine 5'-phosphate + diphosphate = orotate + 5-phospho-alpha-D-ribose 1-diphosphate. It participates in pyrimidine metabolism; UMP biosynthesis via de novo pathway; UMP from orotate: step 1/2. Its function is as follows. Catalyzes the transfer of a ribosyl phosphate group from 5-phosphoribose 1-diphosphate to orotate, leading to the formation of orotidine monophosphate (OMP). This Hahella chejuensis (strain KCTC 2396) protein is Orotate phosphoribosyltransferase.